The chain runs to 96 residues: C-C motif chemokine 20 (96 aa).

A signal peptide spans 1–26; it reads MACKHLPFLALAGVLLAYLCSQSEAA. Intrachain disulfides connect C31–C58 and C32–C74.

It belongs to the intercrine beta (chemokine CC) family. In terms of tissue distribution, low levels in thymus and lung.

Its subcellular location is the secreted. Its function is as follows. Acts as a ligand for C-C chemokine receptor CCR6. Signals through binding and activation of CCR6 and induces a strong chemotactic response and mobilization of intracellular calcium ions. The ligand-receptor pair CCL20-CCR6 is responsible for the chemotaxis of dendritic cells (DC), effector/memory T-cells and B-cells and plays an important role at skin and mucosal surfaces under homeostatic and inflammatory conditions, as well as in pathology, including cancer and autoimmune diseases. CCL20 acts as a chemotactic factor that attracts lymphocytes and, slightly, neutrophils, but not monocytes. Involved in the recruitment of both the pro-inflammatory IL17 producing helper T-cells (Th17) and the regulatory T-cells (Treg) to sites of inflammation. Required for optimal migration of thymic natural regulatory T cells (nTregs) and DN1 early thymocyte progenitor cells. Positively regulates sperm motility and chemotaxis via its binding to CCR6 which triggers Ca2+ mobilization in the sperm which is important for its motility. May be involved in formation and function of the mucosal lymphoid tissues by attracting lymphocytes and dendritic cells towards epithelial cells. The polypeptide is C-C motif chemokine 20 (Ccl20) (Rattus norvegicus (Rat)).